A 113-amino-acid chain; its full sequence is Protein translation factor SUI1 homolog 1 (113 aa).

The interval 1–24 is disordered; that stretch reads MSELDSQVPTAFDPFADANAEDSG. Serine 2 carries the N-acetylserine modification.

This sequence belongs to the SUI1 family.

Its function is as follows. Probably involved in translation. The polypeptide is Protein translation factor SUI1 homolog 1 (Arabidopsis thaliana (Mouse-ear cress)).